A 475-amino-acid polypeptide reads, in one-letter code: FAD-dependent monooxygenase janM (475 aa).

The helical transmembrane segment at valine 8–leucine 24 threads the bilayer. Residues glutamate 35, glycine 49, and arginine 108 each coordinate FAD. N-linked (GlcNAc...) asparagine glycosylation occurs at asparagine 147. Positions 299 and 312 each coordinate FAD. A helical membrane pass occupies residues glycine 432 to valine 451.

This sequence belongs to the paxM FAD-dependent monooxygenase family. FAD serves as cofactor.

The protein localises to the membrane. The protein operates within secondary metabolite biosynthesis. Its function is as follows. FAD-dependent monooxygenase; part of the gene cluster that mediates the biosynthesis of the indole diterpenes janthitremanes such as shearinine K or shearinine A. The geranylgeranyl diphosphate (GGPP) synthase janG catalyzes the first step in janthitremane biosynthesis via conversion of farnesyl pyrophosphate and isopentyl pyrophosphate into geranylgeranyl pyrophosphate (GGPP). Condensation of indole-3-glycerol phosphate with GGPP by the prenyl transferase janC then forms 3-geranylgeranylindole (3-GGI). Epoxidation by the FAD-dependent monooxygenase janM leads to a epoxidized-GGI that is substrate of the terpene cyclase janB for cyclization to yield paspaline. Paspaline is subsequently converted to 13-desoxypaspaline by the cytochrome P450 monooxygenase janP, via beta-PC-M6 in a series of alpha-face oxidations. The cytochrome P450 monooxygenase janQ is proposed to carry out sequential beta-face oxidation steps at C-7 and C-13 of 13-desoxypaspaline to form paspalicine and paspalinine respectively. The indole diterpene prenyltransferase janD may then convert paspalinine into shearinine K which is substrate of janO and/or additional enzymes for oxidation and cyclization to generate shearinine A. The chain is FAD-dependent monooxygenase janM from Penicillium janthinellum (Penicillium vitale).